Here is a 362-residue protein sequence, read N- to C-terminus: Cobalt-precorrin-5B C(1)-methyltransferase (362 aa).

This sequence belongs to the CbiD family.

The enzyme catalyses Co-precorrin-5B + S-adenosyl-L-methionine = Co-precorrin-6A + S-adenosyl-L-homocysteine. It participates in cofactor biosynthesis; adenosylcobalamin biosynthesis; cob(II)yrinate a,c-diamide from sirohydrochlorin (anaerobic route): step 6/10. In terms of biological role, catalyzes the methylation of C-1 in cobalt-precorrin-5B to form cobalt-precorrin-6A. The polypeptide is Cobalt-precorrin-5B C(1)-methyltransferase (Burkholderia ambifaria (strain MC40-6)).